The following is a 227-amino-acid chain: Cytochrome c oxidase subunit 2 (227 aa).

The Mitochondrial intermembrane portion of the chain corresponds to 1 to 14 (MAHAAQVGLQDATS). The chain crosses the membrane as a helical span at residues 15 to 45 (PIMEELITFHDHALMIIFLICFLVLYALFLT). Residues 46–59 (LTTKLTSTNISDAQ) lie on the Mitochondrial matrix side of the membrane. A helical membrane pass occupies residues 60–87 (EMETIWTILPAIILVLIALPSLRILYMT). Over 88–227 (DEINDPSFTI…IFEMGPVFAL (140 aa)) the chain is Mitochondrial intermembrane. 6 residues coordinate Cu cation: H161, C196, E198, C200, H204, and M207. Residue E198 coordinates Mg(2+).

It belongs to the cytochrome c oxidase subunit 2 family. In terms of assembly, component of the cytochrome c oxidase (complex IV, CIV), a multisubunit enzyme composed of 14 subunits. The complex is composed of a catalytic core of 3 subunits MT-CO1, MT-CO2 and MT-CO3, encoded in the mitochondrial DNA, and 11 supernumerary subunits COX4I, COX5A, COX5B, COX6A, COX6B, COX6C, COX7A, COX7B, COX7C, COX8 and NDUFA4, which are encoded in the nuclear genome. The complex exists as a monomer or a dimer and forms supercomplexes (SCs) in the inner mitochondrial membrane with NADH-ubiquinone oxidoreductase (complex I, CI) and ubiquinol-cytochrome c oxidoreductase (cytochrome b-c1 complex, complex III, CIII), resulting in different assemblies (supercomplex SCI(1)III(2)IV(1) and megacomplex MCI(2)III(2)IV(2)). Found in a complex with TMEM177, COA6, COX18, COX20, SCO1 and SCO2. Interacts with TMEM177 in a COX20-dependent manner. Interacts with COX20. Interacts with COX16. The cofactor is Cu cation.

The protein localises to the mitochondrion inner membrane. It catalyses the reaction 4 Fe(II)-[cytochrome c] + O2 + 8 H(+)(in) = 4 Fe(III)-[cytochrome c] + 2 H2O + 4 H(+)(out). Functionally, component of the cytochrome c oxidase, the last enzyme in the mitochondrial electron transport chain which drives oxidative phosphorylation. The respiratory chain contains 3 multisubunit complexes succinate dehydrogenase (complex II, CII), ubiquinol-cytochrome c oxidoreductase (cytochrome b-c1 complex, complex III, CIII) and cytochrome c oxidase (complex IV, CIV), that cooperate to transfer electrons derived from NADH and succinate to molecular oxygen, creating an electrochemical gradient over the inner membrane that drives transmembrane transport and the ATP synthase. Cytochrome c oxidase is the component of the respiratory chain that catalyzes the reduction of oxygen to water. Electrons originating from reduced cytochrome c in the intermembrane space (IMS) are transferred via the dinuclear copper A center (CU(A)) of subunit 2 and heme A of subunit 1 to the active site in subunit 1, a binuclear center (BNC) formed by heme A3 and copper B (CU(B)). The BNC reduces molecular oxygen to 2 water molecules using 4 electrons from cytochrome c in the IMS and 4 protons from the mitochondrial matrix. The protein is Cytochrome c oxidase subunit 2 (MT-CO2) of Gorilla gorilla gorilla (Western lowland gorilla).